The chain runs to 338 residues: VPSPRPQNATVMVWIFGGGFAYGTSSLNVYDGRYLAQAEGAIVVSMNYRVGALGFLSLPGSPVPGNAGLFDQQLALRWVHGNIHRFGGNPQSVTLFGESAGSASVAPHLLSRHSQQFFQRAILQSGTLNAPWATVEDTEARRRAEALAQALGCPTDDDNELLNCLYARPPQEIVSKEGDVVIEPSIFRFPFVPVVDGHFIIDSPIVLLQQGIFKKTDLLLGVNRNEGSFFLIYGAPGFSKDHESLISREDFLENIPMIVPQGNEVSVDAIVLQYTDWLAQNDALKNRDAIEDIVGDYNVICPVVEMATRYAEFGNNVYFYFFNQRASNLPWPQWMGVI.

Asparagine 8 carries an N-linked (GlcNAc...) asparagine glycan. Serine 99 functions as the Acyl-ester intermediate in the catalytic mechanism. Cysteine 153 and cysteine 164 are oxidised to a cystine. Glutamate 226 serves as the catalytic Charge relay system.

This sequence belongs to the type-B carboxylesterase/lipase family.

It localises to the synapse. Its subcellular location is the secreted. It is found in the cell membrane. It catalyses the reaction acetylcholine + H2O = choline + acetate + H(+). In terms of biological role, terminates signal transduction at the neuromuscular junction by rapid hydrolysis of the acetylcholine released into the synaptic cleft. In Myxine glutinosa (Atlantic hagfish), this protein is Acetylcholinesterase (ache).